The sequence spans 157 residues: Lectin (157 aa).

A disulfide bridge links cysteine 37 with cysteine 54.

As to quaternary structure, homodimer. As to expression, detected in fruits (at protein level).

It localises to the secreted. Binds with high affinity specifically to chito-oligosaccharides. May play a role in plant defense against pathogens by directly binding with the chitin cell wall. Forms filamentous structures at higher concentrations and may promote wound healing by forming filaments with phloem proteins like PP1. This Coccinia grandis (Ivy gourd) protein is Lectin.